Here is a 236-residue protein sequence, read N- to C-terminus: 1-(5-phosphoribosyl)-5-[(5-phosphoribosylamino)methylideneamino] imidazole-4-carboxamide isomerase (236 aa).

D8 serves as the catalytic Proton acceptor. Residue D129 is the Proton donor of the active site.

It belongs to the HisA/HisF family.

The protein localises to the cytoplasm. The catalysed reaction is 1-(5-phospho-beta-D-ribosyl)-5-[(5-phospho-beta-D-ribosylamino)methylideneamino]imidazole-4-carboxamide = 5-[(5-phospho-1-deoxy-D-ribulos-1-ylimino)methylamino]-1-(5-phospho-beta-D-ribosyl)imidazole-4-carboxamide. It functions in the pathway amino-acid biosynthesis; L-histidine biosynthesis; L-histidine from 5-phospho-alpha-D-ribose 1-diphosphate: step 4/9. The polypeptide is 1-(5-phosphoribosyl)-5-[(5-phosphoribosylamino)methylideneamino] imidazole-4-carboxamide isomerase (Methanoregula boonei (strain DSM 21154 / JCM 14090 / 6A8)).